A 471-amino-acid chain; its full sequence is N(6)-adenine-specific methyltransferase METTL4 (471 aa).

Belongs to the MT-A70-like family.

The protein resides in the nucleus. It catalyses the reaction a 2'-O-methyladenosine in U2 snRNA + S-adenosyl-L-methionine = an N(6)-methyl-2'-O-methyladenosine in U2 snRNA + S-adenosyl-L-homocysteine + H(+). The enzyme catalyses a 2'-deoxyadenosine in DNA + S-adenosyl-L-methionine = an N(6)-methyl-2'-deoxyadenosine in DNA + S-adenosyl-L-homocysteine + H(+). Its function is as follows. N(6)-adenine-specific methyltransferase that can methylate both RNAs and DNA. Acts as a N(6)-adenine-specific RNA methyltransferase by catalyzing formation of N6,2'-O-dimethyladenosine (m6A(m)) on internal positions of U2 small nuclear RNA (snRNA): methylates the 6th position of adenine residues with a pre-deposited 2'-O-methylation. Internal m6A(m) methylation of snRNAs regulates RNA splicing. Also able to act as a N(6)-adenine-specific DNA methyltransferase by mediating methylation of DNA on the 6th position of adenine (N(6)-methyladenosine). The existence of N(6)-methyladenosine (m6A) on DNA is however unclear in mammals, and additional evidences are required to confirm the role of the N(6)-adenine-specific DNA methyltransferase activity of METTL4 in vivo. Acts as a regulator of mitochondrial transcript levels and mitochondrial DNA (mtDNA) copy number by mediating mtDNA N(6)-methylation: m6A on mtDNA reduces transcription by repressing TFAM DNA-binding and bending. N(6)-methyladenosine deposition by METTL4 regulates Polycomb silencing by triggering ubiquitination and degradation of sensor proteins ASXL1 and MPND, leading to inactivation of the PR-DUB complex and subsequent preservation of Polycomb silencing. The chain is N(6)-adenine-specific methyltransferase METTL4 from Mus musculus (Mouse).